Reading from the N-terminus, the 393-residue chain is Putative F-box/kelch-repeat protein At1g32430 (393 aa).

An F-box domain is found at 1 to 47 (MANKEKLPWDLEEEILSRVPPTSLDRFKTVCKRWNALFNDKTFINNH). Kelch repeat units lie at residues 151–199 (YMKD…NLSV) and 308–357 (WIYV…QVQF).

This Arabidopsis thaliana (Mouse-ear cress) protein is Putative F-box/kelch-repeat protein At1g32430.